Here is a 607-residue protein sequence, read N- to C-terminus: Elongation factor 4 (607 aa).

Positions Ser11–Ala193 constitute a tr-type G domain. Residues Asp23–Thr28 and Asn140–Asp143 each bind GTP.

It belongs to the TRAFAC class translation factor GTPase superfamily. Classic translation factor GTPase family. LepA subfamily.

Its subcellular location is the cell membrane. It catalyses the reaction GTP + H2O = GDP + phosphate + H(+). Functionally, required for accurate and efficient protein synthesis under certain stress conditions. May act as a fidelity factor of the translation reaction, by catalyzing a one-codon backward translocation of tRNAs on improperly translocated ribosomes. Back-translocation proceeds from a post-translocation (POST) complex to a pre-translocation (PRE) complex, thus giving elongation factor G a second chance to translocate the tRNAs correctly. Binds to ribosomes in a GTP-dependent manner. This is Elongation factor 4 from Bacillus cereus (strain B4264).